Reading from the N-terminus, the 359-residue chain is Stearoyl-CoA desaturase (359 aa).

The Cytoplasmic segment spans residues 1–72 (MPAHLLQEEI…EGPRPKLEYV (72 aa)). Residues 73-93 (WRNIILMSLLHLGALYGIILI) traverse the membrane as a helical segment. Asn-75 contributes to the substrate binding site. Residues 94–97 (PTCK) lie on the Lumenal side of the membrane. The helical transmembrane segment at 98–118 (IYTLLWAFAYYLLSAVGVTAG) threads the bilayer. Topologically, residues 119–217 (AHRLWSHRTY…EKLVMFQRRY (99 aa)) are cytoplasmic. Residues His-120 and His-125 each contribute to the Fe cation site. Positions 120–125 (HRLWSH) match the Histidine box-1 motif. The substrate site is built by Asn-148, Arg-155, and Asp-156. Fe cation contacts are provided by His-157, His-160, and His-161. Residues 157 to 161 (HRAHH) carry the Histidine box-2 motif. Residues Arg-188 and Lys-189 each coordinate substrate. Ser-203 carries the phosphoserine modification. The helical transmembrane segment at 218 to 237 (YKPGILLMCFILPTIVPWYC) threads the bilayer. Topologically, residues 238–241 (WGEA) are lumenal. A helical membrane pass occupies residues 242-263 (FPQSLFVATFLRYAIVLNATWL). Trp-262 provides a ligand contact to substrate. The Cytoplasmic portion of the chain corresponds to 264–359 (VNSAAHLYGY…RTGDESYKSG (96 aa)). Fe cation-binding residues include His-269, His-298, His-301, and His-302. The Histidine box-3 motif lies at 298–302 (HNYHH).

It belongs to the fatty acid desaturase type 1 family. It depends on Fe(2+) as a cofactor.

It localises to the endoplasmic reticulum membrane. The catalysed reaction is octadecanoyl-CoA + 2 Fe(II)-[cytochrome b5] + O2 + 2 H(+) = (9Z)-octadecenoyl-CoA + 2 Fe(III)-[cytochrome b5] + 2 H2O. The enzyme catalyses hexadecanoyl-CoA + 2 Fe(II)-[cytochrome b5] + O2 + 2 H(+) = (9Z)-hexadecenoyl-CoA + 2 Fe(III)-[cytochrome b5] + 2 H2O. Stearoyl-CoA desaturase that utilizes O(2) and electrons from reduced cytochrome b5 to introduce the first double bond into saturated fatty acyl-CoA substrates. Catalyzes the insertion of a cis double bond at the delta-9 position into fatty acyl-CoA substrates including palmitoyl-CoA and stearoyl-CoA. Gives rise to a mixture of 16:1 and 18:1 unsaturated fatty acids. Plays an important role in lipid biosynthesis. Plays an important role in regulating the expression of genes that are involved in lipogenesis and in regulating mitochondrial fatty acid oxidation. Plays an important role in body energy homeostasis. Contributes to the biosynthesis of membrane phospholipids, cholesterol esters and triglycerides. The polypeptide is Stearoyl-CoA desaturase (SCD) (Sus scrofa (Pig)).